We begin with the raw amino-acid sequence, 1203 residues long: Metabotropic glutamate receptor 5 (1203 aa).

Positions 1–18 are cleaved as a signal peptide; it reads MVLLLILSVLLLKEDVRG. The Extracellular portion of the chain corresponds to 19-579; it reads SAQSSERRVV…QYLRWGDPEP (561 aa). Residues Cys-57 and Cys-99 are joined by a disulfide bond. L-glutamate is bound at residue Tyr-64. Asn-88 carries an N-linked (GlcNAc...) asparagine glycan. Residues Ser-151 and 172 to 174 contribute to the L-glutamate site; that span reads SAT. Asn-209 carries N-linked (GlcNAc...) asparagine glycosylation. Tyr-222 lines the L-glutamate pocket. Intrachain disulfides connect Cys-240–Cys-529, Cys-275–Cys-277, Cys-364–Cys-380, Cys-418–Cys-425, Cys-510–Cys-530, Cys-514–Cys-533, Cys-536–Cys-548, and Cys-551–Cys-564. Asp-304 is an L-glutamate binding site. 2 N-linked (GlcNAc...) asparagine glycosylation sites follow: Asn-377 and Asn-381. Lys-395 contributes to the L-glutamate binding site. Asn-444 is a glycosylation site (N-linked (GlcNAc...) asparagine). The chain crosses the membrane as a helical span at residues 580–602; that stretch reads IAAVVFACLGLLATLFVTVIFII. At 603 to 612 the chain is on the cytoplasmic side; it reads YRDTPVVKSS. Residues 613–635 form a helical membrane-spanning segment; the sequence is SRELCYIILAGICLGYLCTFCLI. Residues 636 to 643 are Extracellular-facing; sequence AKPKQIYC. Cys-643 and Cys-732 form a disulfide bridge. The helical transmembrane segment at 644–666 threads the bilayer; that stretch reads YLQRIGIGLSPAMSYSALVTKTN. The Cytoplasmic segment spans residues 667 to 692; it reads RIARILAGSKKKICTKKPRFMSACAQ. The helical transmembrane segment at 693–713 threads the bilayer; the sequence is LVIAFILICIQLGIIVALFIM. The Extracellular portion of the chain corresponds to 714 to 736; that stretch reads EPPDIMHDYPSIREVYLICNTTN. Residue Asn-733 is glycosylated (N-linked (GlcNAc...) asparagine). Residues 737 to 758 traverse the membrane as a helical segment; it reads LGVVTPLGYNGLLILSCTFYAF. Residues 759-771 are Cytoplasmic-facing; sequence KTRNVPANFNEAK. A helical transmembrane segment spans residues 772–794; that stretch reads YIAFTMYTTCIIWLAFVPIYFGS. The Extracellular segment spans residues 795 to 797; it reads NYK. The chain crosses the membrane as a helical span at residues 798 to 819; sequence IITMCFSVSLSATVALGCMFVP. The Cytoplasmic segment spans residues 820-1203; the sequence is KVYIILAKPE…RDYTQSSSSL (384 aa). Ser-860 carries the phosphoserine modification. At Arg-868 the chain carries Omega-N-methylarginine. Disordered regions lie at residues 892–1054 and 1120–1182; these read FTPK…GSLM and TGGA…ALCI. The segment covering 905–920 has biased composition (polar residues); it reads TMSSSNGKSVTWAQNE. Residue Arg-924 is modified to Omega-N-methylarginine. Residues 960 to 977 are compositionally biased toward gly residues; sequence QGAGAGGGSGPGAAGAGS. A compositionally biased stretch (low complexity) spans 1007–1019; the sequence is PAAARPRSPSPIS. A phosphoserine mark is found at Ser-1014 and Ser-1016. 2 stretches are compositionally biased toward polar residues: residues 1039-1054 and 1165-1176; these read HSETAARSSSSQGSLM and DSGSTTPNSPVS.

This sequence belongs to the G-protein coupled receptor 3 family. The PPXXF motif binds HOMER1, HOMER2 and HOMER3. Interacts with RYR1, RYR2, ITPR1, SHANK1 and SHANK3. Interacts with SIAH1 and TAMALIN. Interacts with NCDN. Interacts with NECAB2. Interacts with CAMK2A.

The protein localises to the cell membrane. G-protein coupled receptor for glutamate. Ligand binding causes a conformation change that triggers signaling via guanine nucleotide-binding proteins (G proteins) and modulates the activity of down-stream effectors. Signaling activates a phosphatidylinositol-calcium second messenger system and generates a calcium-activated chloride current. Plays an important role in the regulation of synaptic plasticity and the modulation of the neural network activity. This Mus musculus (Mouse) protein is Metabotropic glutamate receptor 5 (Grm5).